Consider the following 464-residue polypeptide: UDP-N-acetylmuramoylalanine--D-glutamate ligase (464 aa).

An ATP-binding site is contributed by 112–118; that stretch reads GTDGKTT.

This sequence belongs to the MurCDEF family.

The protein resides in the cytoplasm. It catalyses the reaction UDP-N-acetyl-alpha-D-muramoyl-L-alanine + D-glutamate + ATP = UDP-N-acetyl-alpha-D-muramoyl-L-alanyl-D-glutamate + ADP + phosphate + H(+). The protein operates within cell wall biogenesis; peptidoglycan biosynthesis. Its function is as follows. Cell wall formation. Catalyzes the addition of glutamate to the nucleotide precursor UDP-N-acetylmuramoyl-L-alanine (UMA). The chain is UDP-N-acetylmuramoylalanine--D-glutamate ligase from Pelodictyon phaeoclathratiforme (strain DSM 5477 / BU-1).